A 268-amino-acid chain; its full sequence is 4-hydroxy-tetrahydrodipicolinate reductase (268 aa).

NAD(+)-binding positions include 8-13 (GGGGKM) and glutamate 34. Residue lysine 35 coordinates NADP(+). NAD(+) is bound by residues 98–100 (GST) and 122–125 (APNM). Histidine 155 acts as the Proton donor/acceptor in catalysis. (S)-2,3,4,5-tetrahydrodipicolinate is bound at residue histidine 156. The active-site Proton donor is lysine 159. 165–166 (GT) contacts (S)-2,3,4,5-tetrahydrodipicolinate.

Belongs to the DapB family.

The protein resides in the cytoplasm. It carries out the reaction (S)-2,3,4,5-tetrahydrodipicolinate + NAD(+) + H2O = (2S,4S)-4-hydroxy-2,3,4,5-tetrahydrodipicolinate + NADH + H(+). The enzyme catalyses (S)-2,3,4,5-tetrahydrodipicolinate + NADP(+) + H2O = (2S,4S)-4-hydroxy-2,3,4,5-tetrahydrodipicolinate + NADPH + H(+). Its pathway is amino-acid biosynthesis; L-lysine biosynthesis via DAP pathway; (S)-tetrahydrodipicolinate from L-aspartate: step 4/4. Functionally, catalyzes the conversion of 4-hydroxy-tetrahydrodipicolinate (HTPA) to tetrahydrodipicolinate. The chain is 4-hydroxy-tetrahydrodipicolinate reductase from Syntrophus aciditrophicus (strain SB).